The primary structure comprises 106 residues: Heat shock protein HspQ (106 aa).

The tract at residues 80-106 is disordered; sequence DEHLDNDSMDELSQSIRNQLQAPRLRN. Residues 90–100 show a composition bias toward polar residues; sequence ELSQSIRNQLQ.

This sequence belongs to the HspQ family.

The protein resides in the cytoplasm. Involved in the degradation of certain denaturated proteins, including DnaA, during heat shock stress. The sequence is that of Heat shock protein HspQ from Proteus mirabilis (strain HI4320).